A 261-amino-acid polypeptide reads, in one-letter code: MSDALIRLEKVAVRFAGQNVLDNIHLSVEPGQIVTLIGPNGAGKTTLVRAVLGLLKPDSGSVWRKPKLRVGYMPQKLHVDPTLPLSVLRFLRLVPGVDRPRALAALKEVGAEHVIDSPVQSVSGGEMQRVLLARALLREPELLVLDEPVQGVDVAGQAELYSLITRLRDRHGCGVLMVSHDLHLVMSTTDQVVCLNRHVCCSGHPEQVSGDPAFVELFGNNAPSLAIYHHHHDHAHDLHGSVVKGPVTGQPHVHGDSCKHG.

In terms of domain architecture, ABC transporter spans 6–221 (IRLEKVAVRF…PAFVELFGNN (216 aa)). 38-45 (GPNGAGKT) contributes to the ATP binding site.

It belongs to the ABC transporter superfamily. Zinc importer (TC 3.A.1.15.5) family. As to quaternary structure, the complex is composed of two ATP-binding proteins (ZnuC), two transmembrane proteins (ZnuB) and a solute-binding protein (ZnuA).

Its subcellular location is the cell inner membrane. It carries out the reaction Zn(2+)(out) + ATP(in) + H2O(in) = Zn(2+)(in) + ADP(in) + phosphate(in) + H(+)(in). In terms of biological role, part of the ABC transporter complex ZnuABC involved in zinc import. Responsible for energy coupling to the transport system. The chain is Zinc import ATP-binding protein ZnuC from Pseudomonas fluorescens (strain Pf0-1).